Here is a 457-residue protein sequence, read N- to C-terminus: Argininosuccinate lyase (457 aa).

This sequence belongs to the lyase 1 family. Argininosuccinate lyase subfamily.

It is found in the cytoplasm. The catalysed reaction is 2-(N(omega)-L-arginino)succinate = fumarate + L-arginine. It participates in amino-acid biosynthesis; L-arginine biosynthesis; L-arginine from L-ornithine and carbamoyl phosphate: step 3/3. The sequence is that of Argininosuccinate lyase from Shigella boydii serotype 18 (strain CDC 3083-94 / BS512).